Here is a 254-residue protein sequence, read N- to C-terminus: Sulfoacetaldehyde reductase (254 aa).

8–32 (FITGATSGFGEAAAQVFADAGWSLV) is a binding site for NADP(+). Ser141 contributes to the substrate binding site. Tyr154 serves as the catalytic Proton acceptor.

This sequence belongs to the short-chain dehydrogenases/reductases (SDR) family. As to quaternary structure, homodimer and heterotetramer.

It catalyses the reaction 2-hydroxyethane-1-sulfonate + NADP(+) = sulfoacetaldehyde + NADPH + H(+). It functions in the pathway organosulfur degradation. Functionally, catalyzes the formation of isethionate from 2-sulfoacetaldehyde in the deaminative pathway of taurine. The enzyme is specific for NADPH; NADH is not a substrate. The chain is Sulfoacetaldehyde reductase (isfD) from Klebsiella oxytoca.